We begin with the raw amino-acid sequence, 1196 residues long: NACHT, LRR and PYD domains-containing protein 1b allele 5 (1196 aa).

Residues 1–22 (MEESPPKQKSNTKVTQHEGQQD) form a disordered region. In terms of domain architecture, NACHT spans 126–435 (QLVIIEGAAG…EFFAAISCIL (310 aa)). ATP is bound at residue 132-139 (GAAGIGKS). LRR repeat units lie at residues 627–647 (NLEG…QSLC) and 684–704 (SLTE…RMLC). The tract at residues 789-922 (FWGPTGPVAT…GYTVLKNPSF (134 aa)) is ZU5. The FIIND domain occupies 789-1072 (FWGPTGPVAT…KFDHLCDQEF (284 aa)). Residues 923–1072 (SPMGVVLRII…KFDHLCDQEF (150 aa)) are UPA. A CARD domain is found at 1106-1189 (HFMDQHREQL…HLVMDLFEKS (84 aa)).

It belongs to the NLRP family. As to quaternary structure, interacts with DPP9; leading to inhibit activation of the inflammasome. DPP9 acts via formation of a ternary complex, composed of a DPP9 homodimer, one full-length Nlrp1b protein, and one cleaved C-terminus of Nlrp1b (NACHT, LRR and PYD domains-containing protein 1b, C-terminus). Interacts with DPP8; leading to inhibit activation of the inflammasome, probably via formation of a ternary complex with DPP8. Interacts (via LRR repeats) with BCL2 and BCL2L1 (via the loop between motifs BH4 and BH3). Interacts with NOD2; this interaction may increase IL1B release. Interacts with EIF2AK2/PKR; this interaction requires EIF2AK2 activity, is accompanied by EIF2AK2 autophosphorylation and promotes inflammasome assembly in response to B.anthracis lethal toxin. Interacts with MEFV; this interaction targets Nlrp1b to degradation by autophagy, hence preventing excessive IL1B- and IL18-mediated inflammation. In terms of assembly, interacts with the C-terminal part of Nlrp1b (NACHT, LRR and PYD domains-containing protein 1b, C-terminus) in absence of pathogens and other damage-associated signals. Interacts with the N-terminal part of Nlrp1b (NACHT, LRR and PYD domains-containing protein 1b, N-terminus) in absence of pathogens and other damage-associated signals. Homomultimer; forms the Nlrp1b inflammasome polymeric complex, a filament composed of homopolymers of this form in response to pathogens and other damage-associated signals. The Nlrp1b inflammasome polymeric complex directly recruits pro-caspase-1 (proCASP1) independently of PYCARD/ASC. Interacts (via CARD domain) with CASP1 (via CARD domain); leading to CASP1 activation. Post-translationally, autocatalytically cleaved. Autocatalytic cleavage in FIIND region occurs constitutively, prior to activation signals, and is required for inflammasome activity (IL1B release), possibly by facilitating CASP1 binding. Both N- and C-terminal parts remain associated non-covalently. In terms of processing, ubiquitinated by the N-end rule pathway in response to pathogens and other damage-associated signals, leading to its degradation by the proteasome and subsequent release of the cleaved C-terminal part of the protein (NACHT, LRR and PYD domains-containing protein 1b, C-terminus), which polymerizes and forms the Nlrp1b inflammasome. (Microbial infection) Cleavage by B.anthracis lethal toxin (LT) endopeptidase promotes ubiquitination and degradation of the N-terminal part, releasing the cleaved C-terminal part of the protein (NACHT, LRR and PYD domains-containing protein 1b, C-terminus), which polymerizes and forms the Nlrp1b inflammasome. In terms of tissue distribution, expressed in macrophages.

The protein resides in the cytoplasm. The protein localises to the cytosol. Its subcellular location is the inflammasome. With respect to regulation, activated by cleavage by B.anthracis lethal toxin (LT) endopeptidase. Cleavage by LT promotes ubiquitination and degradation of the N-terminal part, releasing the cleaved C-terminal part of the protein (NACHT, LRR and PYD domains-containing protein 1b, C-terminus), which polymerizes and forms the Nlrp1b inflammasome. Nlrp1b inflammasome is inhibited by DPP8 and DPP9, which sequester the C-terminal fragment of Nlrp1b (NACHT, LRR and PYD domains-containing protein 1b, C-terminus) in a ternary complex, thereby preventing Nlrp1b oligomerization and activation. Nlrp1b inflammasome is activated by Val-boroPro (Talabostat, PT-100), an inhibitor of dipeptidyl peptidases DPP8 and DPP9. Val-boroPro relieves inhibition of DPP8 and/or DPP9 by promoting disruption of the ternary complex, releasing its C-terminal part from autoinhibition. Activated by metabolic inhibitors, such as 2-deoxy-D-glucose and sodium azide. Not activated by muramyl dipeptide, nor by full-length bacterial peptidoglycan. Its function is as follows. Acts as the sensor component of the Nlrp1b inflammasome, which mediates inflammasome activation in response to various pathogen-associated signals, leading to subsequent pyroptosis. Inflammasomes are supramolecular complexes that assemble in the cytosol in response to pathogens and other damage-associated signals and play critical roles in innate immunity and inflammation. Acts as a recognition receptor (PRR): recognizes specific pathogens and other damage-associated signals, such as B.anthracis lethal toxin (LT) or Val-boroPro inhibitor, and mediates the formation of the inflammasome polymeric complex. In response to pathogen-associated signals, the N-terminal part of Nlrp1b is degraded by the proteasome, releasing the cleaved C-terminal part of the protein (NACHT, LRR and PYD domains-containing protein 1b, C-terminus), which polymerizes to initiate the formation of the inflammasome complex: the inflammasome directly recruits pro-caspase-1 (proCASP1) independently of PYCARD/ASC and promotes caspase-1 (CASP1) activation, which subsequently cleaves and activates inflammatory cytokines IL1B and IL18 and gasdermin-D (GSDMD), leading to pyroptosis. In the absence of GSDMD expression, the Nlrp1b inflammasome is able to recruit and activate CASP8, leading to activation of gasdermin-E (GSDME). Activation of Nlrp1b inflammasome is also required for HMGB1 secretion; the active cytokines and HMGB1 stimulate inflammatory responses. Primary mediator of macrophage susceptibility to B.anthracis LT: in response to B.anthracis infection, macrophages and dendritic cells release IL1B and undergo pyroptosis. This early inflammatory response to the toxin increases resistance to infection by B.anthracis spores. Constitutes the precursor of the Nlrp1b inflammasome, which mediates autoproteolytic processing within the FIIND domain to generate the N-terminal and C-terminal parts, which are associated non-covalently in absence of pathogens and other damage-associated signals. Functionally, regulatory part that prevents formation of the Nlrp1b inflammasome: in absence of pathogens and other damage-associated signals, interacts with the C-terminal part of Nlrp1b (NACHT, LRR and PYD domains-containing protein 1b, C-terminus), preventing activation of the Nlrp1b inflammasome. In response to pathogen-associated signals, this part is ubiquitinated by the N-end rule pathway and degraded by the proteasome, releasing the cleaved C-terminal part of the protein, which polymerizes and forms the Nlrp1b inflammasome. In terms of biological role, constitutes the active part of the Nlrp1b inflammasome. In absence of pathogens and other damage-associated signals, interacts with the N-terminal part of Nlrp1b (NACHT, LRR and PYD domains-containing protein 1b, N-terminus), preventing activation of the Nlrp1b inflammasome. In response to pathogen-associated signals, the N-terminal part of Nlrp1b is degraded by the proteasome, releasing this form, which polymerizes to form the Nlrp1b inflammasome complex: the Nlrp1b inflammasome complex then directly recruits pro-caspase-1 (proCASP1) and promotes caspase-1 (CASP1) activation, leading to gasdermin-D (GSDMD) cleavage and subsequent pyroptosis. The sequence is that of NACHT, LRR and PYD domains-containing protein 1b allele 5 (Nlrp1b) from Mus musculus (Mouse).